Here is a 317-residue protein sequence, read N- to C-terminus: Methionyl-tRNA formyltransferase (317 aa).

A (6S)-5,6,7,8-tetrahydrofolate-binding site is contributed by 109 to 112; it reads SLLP.

The protein belongs to the Fmt family.

The enzyme catalyses L-methionyl-tRNA(fMet) + (6R)-10-formyltetrahydrofolate = N-formyl-L-methionyl-tRNA(fMet) + (6S)-5,6,7,8-tetrahydrofolate + H(+). Its function is as follows. Attaches a formyl group to the free amino group of methionyl-tRNA(fMet). The formyl group appears to play a dual role in the initiator identity of N-formylmethionyl-tRNA by promoting its recognition by IF2 and preventing the misappropriation of this tRNA by the elongation apparatus. The chain is Methionyl-tRNA formyltransferase from Halalkalibacterium halodurans (strain ATCC BAA-125 / DSM 18197 / FERM 7344 / JCM 9153 / C-125) (Bacillus halodurans).